A 526-amino-acid chain; its full sequence is Acetyl-CoA hydrolase (526 aa).

An N-acetylthreonine modification is found at T2. 277–281 (GIGNI) is a binding site for CoA. Residue E302 is the 5-glutamyl coenzyme A thioester intermediate of the active site. Position 350 is a phosphoserine (S350). Residues N392 and G396 each coordinate CoA.

It belongs to the acetyl-CoA hydrolase/transferase family. As to quaternary structure, monomer. In terms of processing, glycosylated; contains mannose.

It is found in the cytoplasm. The enzyme catalyses acetyl-CoA + H2O = acetate + CoA + H(+). Functionally, presumably involved in regulating the intracellular acetyl-CoA pool for fatty acid and cholesterol synthesis and fatty acid oxidation. It may be involved in overall regulation of acetylation during melatonin synthesis. In Saccharomyces cerevisiae (strain ATCC 204508 / S288c) (Baker's yeast), this protein is Acetyl-CoA hydrolase (ACH1).